An 883-amino-acid polypeptide reads, in one-letter code: Translation initiation factor IF-2 (883 aa).

2 disordered regions span residues 52–102 (KGRD…VNVE) and 115–297 (VEAE…PTQP). 2 stretches are compositionally biased toward basic and acidic residues: residues 115-179 (VEAE…REAT) and 204-237 (AAEKEEARRREEEKERRRLEQEARREREAEERAA). Residues 239–248 (KTGATAPAAK) are compositionally biased toward low complexity. Residues 265–275 (PGRRGGKKGGR) show a composition bias toward basic residues. Positions 276–285 (RAASGGEAAK) are enriched in low complexity. One can recognise a tr-type G domain in the interval 383–550 (PRPPVVTVMG…AILLQAELME (168 aa)). The tract at residues 392–399 (GHVDHGKT) is G1. 392 to 399 (GHVDHGKT) serves as a coordination point for GTP. Residues 417-421 (GITQH) form a G2 region. The segment at 438 to 441 (DTPG) is G3. GTP contacts are provided by residues 438–442 (DTPGH) and 492–495 (NKID). The G4 stretch occupies residues 492 to 495 (NKID). The tract at residues 528–530 (SAK) is G5.

This sequence belongs to the TRAFAC class translation factor GTPase superfamily. Classic translation factor GTPase family. IF-2 subfamily.

The protein localises to the cytoplasm. In terms of biological role, one of the essential components for the initiation of protein synthesis. Protects formylmethionyl-tRNA from spontaneous hydrolysis and promotes its binding to the 30S ribosomal subunits. Also involved in the hydrolysis of GTP during the formation of the 70S ribosomal complex. The chain is Translation initiation factor IF-2 from Alkalilimnicola ehrlichii (strain ATCC BAA-1101 / DSM 17681 / MLHE-1).